Consider the following 148-residue polypeptide: Cuticle protein 8 (148 aa).

5 tandem repeats follow at residues 16–19 (AAPA), A22, 28–31 (AAPV), 37–40 (AAPA), and 44–47 (AAPV). In terms of domain architecture, Chitin-binding type R&amp;R spans 58 to 128 (YPKYEFNYGV…RTPGTHPVAV (71 aa)).

In terms of biological role, component of the cuticle of migratory locust which contains more than 100 different structural proteins. In Locusta migratoria (Migratory locust), this protein is Cuticle protein 8.